Reading from the N-terminus, the 448-residue chain is Trigger factor (448 aa).

Residues glycine 172–proline 257 enclose the PPIase FKBP-type domain.

The protein belongs to the FKBP-type PPIase family. Tig subfamily.

Its subcellular location is the cytoplasm. It catalyses the reaction [protein]-peptidylproline (omega=180) = [protein]-peptidylproline (omega=0). Its function is as follows. Involved in protein export. Acts as a chaperone by maintaining the newly synthesized protein in an open conformation. Functions as a peptidyl-prolyl cis-trans isomerase. The chain is Trigger factor from Burkholderia orbicola (strain MC0-3).